The chain runs to 304 residues: Nod factor export ATP-binding protein I (304 aa).

The 231-residue stretch at 6–236 (IDFRNVEKRY…EIGCDVIEIY (231 aa)) folds into the ABC transporter domain. Residue 38–45 (GPNGAGKT) participates in ATP binding.

It belongs to the ABC transporter superfamily. Lipooligosaccharide exporter (TC 3.A.1.102) family. In terms of assembly, the complex is composed of two ATP-binding proteins (NodI) and two transmembrane proteins (NodJ).

It is found in the cell inner membrane. Part of the ABC transporter complex NodIJ involved in the export of the nodulation factors (Nod factors), the bacterial signal molecules that induce symbiosis and subsequent nodulation induction. Nod factors are LCO (lipo-chitin oligosaccharide), a modified beta-1,4-linked N-acetylglucosamine oligosaccharide. This subunit is responsible for energy coupling to the transport system. The chain is Nod factor export ATP-binding protein I from Burkholderia orbicola (strain AU 1054).